Here is a 717-residue protein sequence, read N- to C-terminus: Pre-mRNA-splicing factor ATP-dependent RNA helicase DEAH10 (717 aa).

A disordered region spans residues 1-29; the sequence is MPSMAQGELKSFVQNSRPNPKSPTVSPFS. Residues 12-29 show a composition bias toward polar residues; it reads FVQNSRPNPKSPTVSPFS. The 206-residue stretch at 51–256 folds into the Helicase ATP-binding domain; that stretch reads VEEVQKNDIL…FGGAKAVHVQ (206 aa). 64–71 is an ATP binding site; it reads GETGSGKT. The short motif at 162–165 is the DEAH box element; that stretch reads DEAH. Residues 278 to 453 form the Helicase C-terminal domain; it reads TLVTIFQIHF…NIILQLKALG (176 aa).

The protein belongs to the DEAD box helicase family. DEAH subfamily. PRP22 sub-subfamily. In terms of tissue distribution, widely expressed but spatially and temporally regulated during development.

The protein resides in the nucleus. It is found in the nucleolus. The enzyme catalyses ATP + H2O = ADP + phosphate + H(+). Functionally, involved in pre-mRNA splicing. Plays a role during development in processes such as meristem maintenance, leaf morphogenesis and root morphogenesis. This chain is Pre-mRNA-splicing factor ATP-dependent RNA helicase DEAH10, found in Arabidopsis thaliana (Mouse-ear cress).